We begin with the raw amino-acid sequence, 317 residues long: Phospho-N-acetylmuramoyl-pentapeptide-transferase (317 aa).

9 consecutive transmembrane segments (helical) span residues 3 to 23, 48 to 68, 72 to 92, 112 to 132, 141 to 161, 171 to 191, 193 to 213, 238 to 258, and 297 to 317; these read VIIY…PLFI, GTPT…MIIM, LNSN…IGLI, FLLQ…RFGS, ITWT…FVAV, LDGL…VVSF, WHQY…LGFL, AIAL…IYVI, and VVSV…LSLI.

The protein belongs to the glycosyltransferase 4 family. MraY subfamily. Mg(2+) is required as a cofactor.

The protein resides in the cell membrane. The enzyme catalyses UDP-N-acetyl-alpha-D-muramoyl-L-alanyl-gamma-D-glutamyl-meso-2,6-diaminopimeloyl-D-alanyl-D-alanine + di-trans,octa-cis-undecaprenyl phosphate = di-trans,octa-cis-undecaprenyl diphospho-N-acetyl-alpha-D-muramoyl-L-alanyl-D-glutamyl-meso-2,6-diaminopimeloyl-D-alanyl-D-alanine + UMP. It participates in cell wall biogenesis; peptidoglycan biosynthesis. Catalyzes the initial step of the lipid cycle reactions in the biosynthesis of the cell wall peptidoglycan: transfers peptidoglycan precursor phospho-MurNAc-pentapeptide from UDP-MurNAc-pentapeptide onto the lipid carrier undecaprenyl phosphate, yielding undecaprenyl-pyrophosphoryl-MurNAc-pentapeptide, known as lipid I. The polypeptide is Phospho-N-acetylmuramoyl-pentapeptide-transferase (Clostridium acetobutylicum (strain ATCC 824 / DSM 792 / JCM 1419 / IAM 19013 / LMG 5710 / NBRC 13948 / NRRL B-527 / VKM B-1787 / 2291 / W)).